The primary structure comprises 268 residues: Phosphate import ATP-binding protein PstB 3 (268 aa).

Positions 15–254 (LRTENLNVYY…DATESIFNNP (240 aa)) constitute an ABC transporter domain. 47-54 (GPSGCGKS) contacts ATP.

The protein belongs to the ABC transporter superfamily. Phosphate importer (TC 3.A.1.7) family. As to quaternary structure, the complex is composed of two ATP-binding proteins (PstB), two transmembrane proteins (PstC and PstA) and a solute-binding protein (PstS).

The protein localises to the cell inner membrane. It carries out the reaction phosphate(out) + ATP + H2O = ADP + 2 phosphate(in) + H(+). Functionally, part of the ABC transporter complex PstSACB involved in phosphate import. Responsible for energy coupling to the transport system. This chain is Phosphate import ATP-binding protein PstB 3, found in Nostoc sp. (strain PCC 7120 / SAG 25.82 / UTEX 2576).